The chain runs to 215 residues: Probable serine/threonine-protein kinase 2 (215 aa).

Residues 1–205 (MKPEQLVYLN…WLLKEMEQLL (205 aa)) enclose the Protein kinase domain.

It belongs to the protein kinase superfamily. Ser/Thr protein kinase family. In terms of assembly, interacts with the kinase domain of host EIF2AK2.

It is found in the host cytoplasm. It catalyses the reaction L-seryl-[protein] + ATP = O-phospho-L-seryl-[protein] + ADP + H(+). The enzyme catalyses L-threonyl-[protein] + ATP = O-phospho-L-threonyl-[protein] + ADP + H(+). Functionally, plays a role in the inhibition of host eIF2alpha/EIF2S1 phosphorylation, thereby increasing viral fitness. In the insect host, targets the endogenous insect heme-regulated inhibitor (HRI)-like eIF2alpha kinase. The protein is Probable serine/threonine-protein kinase 2 (PK2) of Autographa californica nuclear polyhedrosis virus (AcMNPV).